The sequence spans 529 residues: Bifunctional purine biosynthesis protein PurH (529 aa).

One can recognise an MGS-like domain in the interval 1 to 148; sequence MQQRRPVRRA…KNHKDVAIVV (148 aa). At K287 the chain carries N6-acetyllysine.

Belongs to the PurH family.

It catalyses the reaction (6R)-10-formyltetrahydrofolate + 5-amino-1-(5-phospho-beta-D-ribosyl)imidazole-4-carboxamide = 5-formamido-1-(5-phospho-D-ribosyl)imidazole-4-carboxamide + (6S)-5,6,7,8-tetrahydrofolate. The enzyme catalyses IMP + H2O = 5-formamido-1-(5-phospho-D-ribosyl)imidazole-4-carboxamide. It functions in the pathway purine metabolism; IMP biosynthesis via de novo pathway; 5-formamido-1-(5-phospho-D-ribosyl)imidazole-4-carboxamide from 5-amino-1-(5-phospho-D-ribosyl)imidazole-4-carboxamide (10-formyl THF route): step 1/1. Its pathway is purine metabolism; IMP biosynthesis via de novo pathway; IMP from 5-formamido-1-(5-phospho-D-ribosyl)imidazole-4-carboxamide: step 1/1. The chain is Bifunctional purine biosynthesis protein PurH from Escherichia coli O157:H7.